The sequence spans 108 residues: uncharacterized protein (108 aa).

Over residues 1–12 (MSNQQKQLQLPS) the composition is skewed to polar residues. The interval 1–22 (MSNQQKQLQLPSASIKKPKEKQ) is disordered.

This is an uncharacterized protein from Dictyostelium discoideum (Social amoeba).